We begin with the raw amino-acid sequence, 192 residues long: Probable Brix domain-containing ribosomal biogenesis protein (192 aa).

Residues 2-191 form the Brix domain; that stretch reads RPAAITTSQR…DFRTKDERMK (190 aa).

In terms of biological role, probably involved in the biogenesis of the ribosome. This is Probable Brix domain-containing ribosomal biogenesis protein from Methanopyrus kandleri (strain AV19 / DSM 6324 / JCM 9639 / NBRC 100938).